We begin with the raw amino-acid sequence, 622 residues long: Low affinity potassium transport system protein Kup (622 aa).

Transmembrane regions (helical) follow at residues 9 to 29 (LPAI…TSPL), 49 to 69 (VFGF…IKYL), 103 to 123 (VIMG…TPAI), 137 to 157 (PQLD…LFMI), 165 to 185 (VGKL…GLGL), 213 to 233 (VSFI…ALYA), 247 to 267 (WFTV…ALLL), 276 to 296 (PFFL…AALA), 337 to 357 (IYIP…IVSF), 363 to 383 (LAAA…ILST), 396 to 416 (FVAL…TANL), and 419 to 439 (LLSG…VMTT).

The protein belongs to the HAK/KUP transporter (TC 2.A.72) family.

The protein resides in the cell inner membrane. It carries out the reaction K(+)(in) + H(+)(in) = K(+)(out) + H(+)(out). Responsible for the low-affinity transport of potassium into the cell. Likely operates as a K(+):H(+) symporter. The chain is Low affinity potassium transport system protein Kup from Shigella sonnei (strain Ss046).